Consider the following 59-residue polypeptide: Putative antitoxin AF_1090 (59 aa).

Belongs to the UPF0165 family.

Functionally, possibly the antitoxin component of a type II toxin-antitoxin (TA) system. The polypeptide is Putative antitoxin AF_1090 (Archaeoglobus fulgidus (strain ATCC 49558 / DSM 4304 / JCM 9628 / NBRC 100126 / VC-16)).